We begin with the raw amino-acid sequence, 232 residues long: 2-C-methyl-D-erythritol 4-phosphate cytidylyltransferase (232 aa).

It belongs to the IspD/TarI cytidylyltransferase family. IspD subfamily.

The enzyme catalyses 2-C-methyl-D-erythritol 4-phosphate + CTP + H(+) = 4-CDP-2-C-methyl-D-erythritol + diphosphate. Its pathway is isoprenoid biosynthesis; isopentenyl diphosphate biosynthesis via DXP pathway; isopentenyl diphosphate from 1-deoxy-D-xylulose 5-phosphate: step 2/6. In terms of biological role, catalyzes the formation of 4-diphosphocytidyl-2-C-methyl-D-erythritol from CTP and 2-C-methyl-D-erythritol 4-phosphate (MEP). This Vibrio cholerae serotype O1 (strain ATCC 39315 / El Tor Inaba N16961) protein is 2-C-methyl-D-erythritol 4-phosphate cytidylyltransferase.